Consider the following 281-residue polypeptide: Src-like-adapter (281 aa).

Residues 1-20 (MGNSMKSTSPPSERPLSSSE) are disordered. The N-myristoyl glycine moiety is linked to residue G2. Over residues 7 to 20 (STSPPSERPLSSSE) the composition is skewed to low complexity. An SH3 domain is found at 22–82 (LESDFLAVLT…PGICVARVYH (61 aa)). The SH2 domain occupies 84–175 (WLFEGLGRDK…GLCCVLTTPC (92 aa)). The interval 190–281 (CTSPGSPVTL…FFSAPQYFED (92 aa)) is SLA C-terminal. At S258 the chain carries Phosphoserine. Y278 is modified (phosphotyrosine).

Homodimer. Interacts with phosphorylated CBL, SYK and LAT. Homodimerization and interaction with phosphorylated CBL occurs via its C-terminal domain. Interacts with PDGFRB and EPHA2. Interacts with phosphorylated proteins ZAP70; CD3Z; VAV1 and LCP2 via its SH2 domain. Predominantly expressed in lymphoid tissues. Highly expressed in spleen, thymus and lymph nodes. Weakly expressed in lung and brain. Expressed in T-cells and at low level in B-cells.

The protein resides in the cytoplasm. The protein localises to the endosome. Its function is as follows. Adapter protein, which negatively regulates T-cell receptor (TCR) signaling. Inhibits T-cell antigen-receptor induced activation of nuclear factor of activated T-cells. Involved in the negative regulation of positive selection and mitosis of T-cells. May act by linking signaling proteins such as ZAP70 with CBL, leading to a CBL dependent degradation of signaling proteins. The sequence is that of Src-like-adapter (Sla) from Mus musculus (Mouse).